Consider the following 1081-residue polypeptide: DNA primase (1081 aa).

Residues 484-497 are compositionally biased toward polar residues; sequence SPNKPQSVHSTPPL. Residues 484 to 508 form a disordered region; the sequence is SPNKPQSVHSTPPLDQSRGDELSPG. The segment at 1024-1064 adopts a CHC2-type zinc-finger fold; sequence CLRAKHLRSARGLARTFLSISADVHGRLCASISQQCFATKC.

This sequence belongs to the herpesviridae DNA primase family. Associates with the helicase and the primase-associated factor to form the helicase-primase factor.

Its subcellular location is the host nucleus. Functionally, essential component of the helicase/primase complex. Unwinds the DNA at the replication forks and generates single-stranded DNA for both leading and lagging strand synthesis. The primase initiates primer synthesis and thereby produces large amount of short RNA primers on the lagging strand that the polymerase elongates using dNTPs. In Equus caballus (Horse), this protein is DNA primase.